The chain runs to 115 residues: U3-lycotoxin-Ls1k (115 aa).

A signal peptide spans 1 to 20 (MKSVLLFGVLLVTLFSYSSA). Residues 21-44 (EMLDDFDQADEDELLSLIEKEEAR) constitute a propeptide that is removed on maturation. Disulfide bonds link cysteine 48/cysteine 63, cysteine 55/cysteine 72, cysteine 62/cysteine 87, and cysteine 74/cysteine 85.

It belongs to the neurotoxin 19 (CSTX) family. 01 subfamily. As to expression, expressed by the venom gland.

The protein resides in the secreted. This chain is U3-lycotoxin-Ls1k, found in Lycosa singoriensis (Wolf spider).